We begin with the raw amino-acid sequence, 116 residues long: Holo-[acyl-carrier-protein] synthase (116 aa).

Positions 8 and 59 each coordinate Mg(2+).

It belongs to the P-Pant transferase superfamily. AcpS family. Mg(2+) is required as a cofactor.

It is found in the cytoplasm. The catalysed reaction is apo-[ACP] + CoA = holo-[ACP] + adenosine 3',5'-bisphosphate + H(+). Functionally, transfers the 4'-phosphopantetheine moiety from coenzyme A to a Ser of acyl-carrier-protein. The chain is Holo-[acyl-carrier-protein] synthase from Staphylococcus saprophyticus subsp. saprophyticus (strain ATCC 15305 / DSM 20229 / NCIMB 8711 / NCTC 7292 / S-41).